The sequence spans 107 residues: Protein TAP1 (107 aa).

The first 23 residues, 1–23 (MESKRVDVLVGLMLIMAIFGVHS), serve as a signal peptide directing secretion.

Stamen.

This Antirrhinum majus (Garden snapdragon) protein is Protein TAP1 (TAP1).